We begin with the raw amino-acid sequence, 493 residues long: Glutamyl-tRNA(Gln) amidotransferase subunit A (493 aa).

Catalysis depends on charge relay system residues Lys-79 and Ser-159. The active-site Acyl-ester intermediate is the Ser-183.

The protein belongs to the amidase family. GatA subfamily. In terms of assembly, heterotrimer of A, B and C subunits.

The catalysed reaction is L-glutamyl-tRNA(Gln) + L-glutamine + ATP + H2O = L-glutaminyl-tRNA(Gln) + L-glutamate + ADP + phosphate + H(+). In terms of biological role, allows the formation of correctly charged Gln-tRNA(Gln) through the transamidation of misacylated Glu-tRNA(Gln) in organisms which lack glutaminyl-tRNA synthetase. The reaction takes place in the presence of glutamine and ATP through an activated gamma-phospho-Glu-tRNA(Gln). This is Glutamyl-tRNA(Gln) amidotransferase subunit A from Rhizobium leguminosarum bv. trifolii (strain WSM2304).